Reading from the N-terminus, the 425-residue chain is D-amino acid dehydrogenase (425 aa).

3–17 (VLVMGAGVIGVTTAY) serves as a coordination point for FAD.

The protein belongs to the DadA oxidoreductase family. The cofactor is FAD.

It carries out the reaction a D-alpha-amino acid + A + H2O = a 2-oxocarboxylate + AH2 + NH4(+). The protein operates within amino-acid degradation; D-alanine degradation; NH(3) and pyruvate from D-alanine: step 1/1. In terms of biological role, oxidative deamination of D-amino acids. In Rhodopseudomonas palustris (strain HaA2), this protein is D-amino acid dehydrogenase.